The chain runs to 164 residues: Small ribosomal subunit protein uS5 (164 aa).

The region spanning 10-73 (LEERVVAVNR…DDAKKNLIEV (64 aa)) is the S5 DRBM domain.

This sequence belongs to the universal ribosomal protein uS5 family. In terms of assembly, part of the 30S ribosomal subunit. Contacts proteins S4 and S8.

Functionally, with S4 and S12 plays an important role in translational accuracy. Located at the back of the 30S subunit body where it stabilizes the conformation of the head with respect to the body. The protein is Small ribosomal subunit protein uS5 of Streptococcus pneumoniae serotype 2 (strain D39 / NCTC 7466).